The chain runs to 396 residues: Elongation factor Tu (396 aa).

One can recognise a tr-type G domain in the interval 10 to 205 (KPHVNIGTIG…ACDDSIPDPE (196 aa)). Residues 19–26 (GHVDHGKT) are G1. Position 19 to 26 (19 to 26 (GHVDHGKT)) interacts with GTP. Residue Thr-26 coordinates Mg(2+). The tract at residues 62 to 66 (GITIN) is G2. Residues 83–86 (DAPG) are G3. Residues 83-87 (DAPGH) and 138-141 (NKCD) each bind GTP. The G4 stretch occupies residues 138–141 (NKCD). Residues 175–177 (SAL) are G5.

This sequence belongs to the TRAFAC class translation factor GTPase superfamily. Classic translation factor GTPase family. EF-Tu/EF-1A subfamily. As to quaternary structure, monomer.

It is found in the cytoplasm. The enzyme catalyses GTP + H2O = GDP + phosphate + H(+). Functionally, GTP hydrolase that promotes the GTP-dependent binding of aminoacyl-tRNA to the A-site of ribosomes during protein biosynthesis. The polypeptide is Elongation factor Tu (Corynebacterium diphtheriae (strain ATCC 700971 / NCTC 13129 / Biotype gravis)).